The sequence spans 300 residues: Bifunctional protein FolD (300 aa).

NADP(+) is bound by residues 168–170 (GRS), Ser-193, and Ile-234.

The protein belongs to the tetrahydrofolate dehydrogenase/cyclohydrolase family. As to quaternary structure, homodimer.

The catalysed reaction is (6R)-5,10-methylene-5,6,7,8-tetrahydrofolate + NADP(+) = (6R)-5,10-methenyltetrahydrofolate + NADPH. It catalyses the reaction (6R)-5,10-methenyltetrahydrofolate + H2O = (6R)-10-formyltetrahydrofolate + H(+). It participates in one-carbon metabolism; tetrahydrofolate interconversion. In terms of biological role, catalyzes the oxidation of 5,10-methylenetetrahydrofolate to 5,10-methenyltetrahydrofolate and then the hydrolysis of 5,10-methenyltetrahydrofolate to 10-formyltetrahydrofolate. The chain is Bifunctional protein FolD from Ehrlichia ruminantium (strain Welgevonden).